The following is a 359-amino-acid chain: 4-galactosyl-N-acetylglucosaminide 3-alpha-L-fucosyltransferase 9 (359 aa).

Over methionine 1–proline 11 the chain is Cytoplasmic. A helical; Signal-anchor for type II membrane protein membrane pass occupies residues phenylalanine 12 to proline 32. At threonine 33–asparagine 359 the chain is on the lumenal side. Asparagine 62 carries an N-linked (GlcNAc...) asparagine glycan. The tract at residues glutamate 63–tyrosine 168 is acceptor-binding. Glutamine 75 contributes to the a beta-D-galactosyl-(1-&gt;4)-N-acetyl-beta-D-glucosaminyl derivative binding site. 3 disulfide bridges follow: cysteine 82/cysteine 335, cysteine 91/cysteine 338, and cysteine 190/cysteine 238. Asparagine 101 carries N-linked (GlcNAc...) asparagine glycosylation. Position 137 (glutamate 137) interacts with a beta-D-galactosyl-(1-&gt;4)-N-acetyl-beta-D-glucosaminyl derivative. Glutamate 137 functions as the Nucleophile in the catalytic mechanism. Glutamate 137 lines the GDP-beta-L-fucose pocket. The N-linked (GlcNAc...) asparagine glycan is linked to asparagine 153. Tyrosine 168, valine 192, serine 194, asparagine 195, arginine 202, valine 226, tyrosine 241, asparagine 246, tyrosine 252, glutamate 255, and lysine 256 together coordinate GDP-beta-L-fucose. A donor-binding region spans residues glycine 169 to leucine 326. Residues proline 327–asparagine 359 form an acceptor-binding region.

Belongs to the glycosyltransferase 10 family. As to quaternary structure, homodimer. In terms of processing, N-glycosylated with complex-type N-glycans. The glycan alpha-D-Man-(1-&gt;3)-beta-D-Man-(1-&gt;4)-GlcNAc-(1-&gt;4)-GlcNAc is attached at Asn-153. Strongly expressed in forebrain and stomach, lower expression in spleen and peripheral blood leukocytes, and no expression in small intestine, colon, liver, lung, kidney, adrenal cortex or uterus. Highly expressed in granulocytes. Not expressed in monocytes.

The protein resides in the golgi apparatus. The protein localises to the trans-Golgi network membrane. It is found in the golgi apparatus membrane. The enzyme catalyses a beta-D-galactosyl-(1-&gt;4)-N-acetyl-beta-D-glucosaminyl derivative + GDP-beta-L-fucose = a beta-D-galactosyl-(1-&gt;4)-[alpha-L-fucosyl-(1-&gt;3)]-N-acetyl-beta-D-glucosaminyl derivative + GDP + H(+). It catalyses the reaction an alpha-Neu5Ac-(2-&gt;3)-beta-D-Gal-(1-&gt;4)-beta-D-GlcNAc-(1-&gt;3)-beta-D-Gal-(1-&gt;4)-beta-D-GlcNAc derivative + GDP-beta-L-fucose = an alpha-Neu5Ac-(2-&gt;3)-beta-D-Gal-(1-&gt;4)-beta-D-GlcNAc-(1-&gt;3)-beta-D-Gal-(1-&gt;4)-[alpha-L-Fuc-(1-&gt;3)]-beta-D-GlcNAc derivative + GDP + H(+). It carries out the reaction alpha-N-glycoloylneuraminosyl-(2-&gt;3)-beta-D-galactosyl-(1-&gt;4)-N-acetyl-beta-D-glucosaminyl-(1-&gt;3)-beta-D-galactosyl-(1-&gt;4)-N-acetyl-beta-D-glucosaminyl-(1-&gt;3)-beta-D-galactosyl-(1-&gt;4)-beta-D-glucosyl-(1&lt;-&gt;1')-ceramide + GDP-beta-L-fucose = alpha-N-glycoloylneuraminosyl-(2-&gt;3)-beta-D-galactosyl-(1-&gt;4)-N-acetyl-beta-D-glucosaminyl-(1-&gt;3)-beta-D-galactosyl-(1-&gt;4)-[alpha-L-fucosyl-(1-&gt;3)]-N-acetyl-beta-D-glucosaminyl-(1-&gt;3)-beta-D-galactosyl-(1-&gt;4)-beta-D-glucosyl-(1&lt;-&gt;1')-ceramide + GDP + H(+). The catalysed reaction is alpha-D-galactosyl-(1-&gt;3)-beta-D-galactosyl-(1-&gt;4)-N-acetyl-beta-D-glucosaminyl-(1-&gt;3)-beta-D-galactosyl-(1-&gt;4)-beta-D-glucosyl-(1&lt;-&gt;1')-ceramide + GDP-beta-L-fucose = a neolactoside IV(3)-alpha-Gal,III(3)-alpha-Fuc-nLc4Cer + GDP + H(+). The enzyme catalyses a neolactoside nLc4Cer + GDP-beta-L-fucose = a neolactoside III(3)-alpha-Fuc-nLc4Cer + GDP + H(+). It catalyses the reaction an N-acetyl-alpha-neuraminyl-(2-&gt;3)-beta-D-galactosyl-(1-&gt;4)-N-acetyl-beta-D-glucosaminyl derivative + GDP-beta-L-fucose = an alpha-Neu5Ac-(2-&gt;3)-beta-D-Gal-(1-&gt;4)-[alpha-L-Fuc-(1-&gt;3)]-beta-D-GlcNAc derivative + GDP + H(+). It carries out the reaction beta-D-Gal-(1-&gt;4)-beta-D-GlcNAc-(1-&gt;3)-beta-D-Gal-(1-&gt;4)-D-Glc + GDP-beta-L-fucose = beta-D-Gal-(1-&gt;4)-[alpha-L-Fuc-(1-&gt;3)]-beta-D-GlcNAc-(1-&gt;3)-beta-D-Gal-(1-&gt;4)-D-Glc + GDP + H(+). The catalysed reaction is an alpha-L-Fuc-(1-&gt;2)-beta-D-Gal-(1-&gt;4)-beta-D-GlcNAc derivative + GDP-beta-L-fucose = an alpha-L-Fuc-(1-&gt;2)-beta-D-Gal-(1-&gt;4)-[alpha-L-Fuc-(1-&gt;3)]-beta-D-GlcNAc derivative + GDP + H(+). It functions in the pathway protein modification; protein glycosylation. Its pathway is glycolipid biosynthesis. Its activity is regulated as follows. Activated by Mn2+. Its function is as follows. Catalyzes alpha(1-&gt;3) linkage of fucosyl moiety transferred from GDP-beta-L-fucose to N-acetyl glucosamine (GlcNAc) within type 2 lactosamine (LacNAc, beta-D-Gal-(1-&gt;4)-beta-D-GlcNAc-) glycan attached to glycolipids and N- or O-linked glycoproteins. Fucosylates distal type 2 LacNAc and its fucosylated (H-type 2 LacNAc) and sialylated (sialyl-type 2 LacNAc) derivatives to form Lewis x (Lex) (CD15) and Lewis y (Ley) antigenic epitopes involved in cell adhesion and differentiation. Generates Lex epitopes in the brain, presumably playing a role in the maintenance of neuronal stemness and neurite outgrowth in progenitor neural cells. Fucosylates the internal type 2 LacNAc unit of the polylactosamine chain to form VIM-2 antigen that serves as recognition epitope for SELE. Can also modify milk oligosaccharides, in particular type 2 tetrasaccharide LNnT. The chain is 4-galactosyl-N-acetylglucosaminide 3-alpha-L-fucosyltransferase 9 from Homo sapiens (Human).